A 539-amino-acid polypeptide reads, in one-letter code: Chaperonin GroEL (539 aa).

ATP contacts are provided by residues 29-32 (TLGP), 86-90 (DGTTT), Gly-413, 477-479 (DAL), and Asp-493.

Belongs to the chaperonin (HSP60) family. As to quaternary structure, forms a cylinder of 14 subunits composed of two heptameric rings stacked back-to-back. Interacts with the co-chaperonin GroES.

It is found in the cytoplasm. It catalyses the reaction ATP + H2O + a folded polypeptide = ADP + phosphate + an unfolded polypeptide.. In terms of biological role, together with its co-chaperonin GroES, plays an essential role in assisting protein folding. The GroEL-GroES system forms a nano-cage that allows encapsulation of the non-native substrate proteins and provides a physical environment optimized to promote and accelerate protein folding. In Clostridium perfringens (strain 13 / Type A), this protein is Chaperonin GroEL.